A 131-amino-acid chain; its full sequence is uncharacterized protein (131 aa).

The first 16 residues, 1–16 (MDVLFVAIFAVPLILG), serve as a signal peptide directing secretion.

Its subcellular location is the secreted. This is an uncharacterized protein from Homo sapiens (Human).